A 294-amino-acid chain; its full sequence is PAK4-inhibitor INKA2 (294 aa).

Disordered regions lie at residues 50-143 (ISGG…STLM), 170-198 (PELEKGGEKGETGEAGEPKGGRGQPRELG), and 223-290 (LKEK…DINT). Positions 85 to 99 (SPSNQASLGSTSSGK) are enriched in polar residues. Residues 134–177 (EPDDWTSTLMSRGRNRQPLVLGDNVFADLVGNWLDLPELEKGGE) form an inka box region. Residues 171–198 (ELEKGGEKGETGEAGEPKGGRGQPRELG) are compositionally biased toward basic and acidic residues. The segment covering 241-253 (RSQKVKKRSHSKG) has biased composition (basic residues).

Belongs to the INKA family. In terms of assembly, interacts with PAK4.

It is found in the nucleus. Its function is as follows. Inhibitor of the serine/threonine-protein kinase PAK4. Acts by binding PAK4 in a substrate-like manner, inhibiting the protein kinase activity. The polypeptide is PAK4-inhibitor INKA2 (Bos taurus (Bovine)).